Reading from the N-terminus, the 316-residue chain is uncharacterized protein (316 aa).

BNR repeat units lie at residues 62–73 (FISDSQGLKFSP), 124–135 (KISVDNGLTWSN), 196–207 (FISRDGGLTWRV), and 242–253 (YFSLDQGRTWNQ).

This is an uncharacterized protein from Saccharomyces cerevisiae (strain ATCC 204508 / S288c) (Baker's yeast).